The sequence spans 750 residues: Glutamate carboxypeptidase 2 (750 aa).

The Cytoplasmic portion of the chain corresponds to 1–19 (MWNLLHETDSAVATARRPR). Serine 10 carries the post-translational modification Phosphoserine. The helical; Signal-anchor for type II membrane protein transmembrane segment at 20–43 (WLCAGALVLAGGFFLLGFLFGWFI) threads the bilayer. At 44–750 (KSSNEATNIT…AAAETLSEVA (707 aa)) the chain is on the extracellular side. Asparagine 51, asparagine 76, asparagine 121, asparagine 140, asparagine 153, and asparagine 195 each carry an N-linked (GlcNAc...) asparagine glycan. The substrate site is built by arginine 210 and asparagine 257. Threonine 269 and tyrosine 272 together coordinate Ca(2+). Residues 274 to 587 (ANEYAYRRGI…QVRGGMVFEL (314 aa)) are NAALADase. Residue asparagine 336 is glycosylated (N-linked (GlcNAc...) asparagine). The Zn(2+) site is built by histidine 377 and aspartate 387. Glutamate 424 serves as a coordination point for substrate. Glutamate 424 (nucleophile; for NAALADase activity) is an active-site residue. Residue glutamate 425 coordinates Zn(2+). Ca(2+) contacts are provided by glutamate 433 and glutamate 436. Position 453 (aspartate 453) interacts with Zn(2+). Asparagine 459 and asparagine 476 each carry an N-linked (GlcNAc...) asparagine glycan. Residues 517–518 (SG), asparagine 519, 534–536 (RAR), tyrosine 552, and 552–553 (YH) contribute to the substrate site. Histidine 553 is a binding site for Zn(2+). The active-site Charge relay system is the serine 628. Asparagine 638 is a glycosylation site (N-linked (GlcNAc...) asparagine). Active-site charge relay system residues include aspartate 666 and histidine 689. Residue 699–700 (KY) participates in substrate binding.

It belongs to the peptidase M28 family. M28B subfamily. In terms of assembly, homodimer. Zn(2+) serves as cofactor. In terms of processing, the first two amino acids at the N-terminus of isoform PSMA' appear to be cleaved by limited proteolysis. Post-translationally, the N-terminus is blocked. As to expression, highly expressed in prostate epithelium. Detected in urinary bladder, kidney, testis, ovary, fallopian tube, breast, adrenal gland, liver, esophagus, stomach, small intestine, colon and brain (at protein level). Detected in the small intestine, brain, kidney, liver, spleen, colon, trachea, spinal cord and the capillary endothelium of a variety of tumors. Expressed specifically in jejunum brush border membranes. In the brain, highly expressed in the ventral striatum and brain stem. Also expressed in fetal liver and kidney. Isoform PSMA' is the most abundant form in normal prostate. Isoform PSMA-1 is the most abundant form in primary prostate tumors. Isoform PSMA-9 is specifically expressed in prostate cancer.

It localises to the cell membrane. It is found in the cytoplasm. It carries out the reaction Release of an unsubstituted, C-terminal glutamyl residue, typically from Ac-Asp-Glu or folylpoly-gamma-glutamates.. The NAALADase activity is inhibited by beta-NAAG, quisqualic acid, 2-(phosphonomethyl) pentanedioic acid (PMPA) and EDTA. Activated by cobalt. Its function is as follows. Has both folate hydrolase and N-acetylated-alpha-linked-acidic dipeptidase (NAALADase) activity. Has a preference for tri-alpha-glutamate peptides. In the intestine, required for the uptake of folate. In the brain, modulates excitatory neurotransmission through the hydrolysis of the neuropeptide, N-aceylaspartylglutamate (NAAG), thereby releasing glutamate. Involved in prostate tumor progression. Also exhibits a dipeptidyl-peptidase IV type activity. In vitro, cleaves Gly-Pro-AMC. The polypeptide is Glutamate carboxypeptidase 2 (Homo sapiens (Human)).